The primary structure comprises 639 residues: Synaptotagmin-16 (639 aa).

A compositionally biased stretch (polar residues) spans 95-119 (NSDLQDSVQTASPTLGQQAEDSSSV). Residues 95 to 191 (NSDLQDSVQT…SSESDEDVTK (97 aa)) are disordered. The span at 121-134 (PPWPSKIPGAPKPQ) shows a compositional bias: pro residues. The segment covering 142 to 151 (EEDHHSERQR) has biased composition (basic and acidic residues). Positions 174–187 (GDDEEPSTSSESDE) are enriched in acidic residues. In terms of domain architecture, C2 1 spans 344 to 463 (KCGDLDVIFE…HPEGEMKVTL (120 aa)). The tract at residues 470–496 (NLSSGESPLSPSVVSHSDSASSTQSLS) is disordered. Residues 476–496 (SPLSPSVVSHSDSASSTQSLS) are compositionally biased toward low complexity. The C2 2 domain occupies 499 to 634 (GVPELLVGLS…SKGQQTCRWH (136 aa)).

Belongs to the synaptotagmin family. As to quaternary structure, homodimer. Can also form heterodimers. Highly expressed in heart and testis. Moderately expressed in kidney.

May be involved in the trafficking and exocytosis of secretory vesicles in non-neuronal tissues. Is Ca(2+)-independent. The chain is Synaptotagmin-16 (Syt16) from Mus musculus (Mouse).